The chain runs to 112 residues: Large ribosomal subunit protein bL20c (112 aa).

It belongs to the bacterial ribosomal protein bL20 family.

It localises to the plastid. The protein localises to the chloroplast. In terms of biological role, binds directly to 23S ribosomal RNA and is necessary for the in vitro assembly process of the 50S ribosomal subunit. It is not involved in the protein synthesizing functions of that subunit. In Chlamydomonas reinhardtii (Chlamydomonas smithii), this protein is Large ribosomal subunit protein bL20c (rpl20).